We begin with the raw amino-acid sequence, 244 residues long: MKHPPCSVVAAATAILAVVLAIGGCSTEGDAGKASDTAATASNGDAAMLLKQATDAMRKVTGMHVRLAVTGDVPNLRVTKLEGDISNTPQTVATGSATLLVGNKSEDAKFVYVDGHLYSDLGQPGTYTDFGNGASIYNVSVLLDPNKGLANLLANLKDASVAGSQQADGVATTKITGNSSADDIATLAGSRLTSEDVKTVPTTVWIASDGSSHLVQIQIAPTKDTSVTLTMSDWGKQVTATKPV.

The N-terminal stretch at 1-24 is a signal peptide; the sequence is MKHPPCSVVAAATAILAVVLAIGG. Cysteine 25 is lipidated: N-palmitoyl cysteine. A lipid anchor (S-diacylglycerol cysteine) is attached at cysteine 25.

The protein belongs to the LppX/LprAFG lipoprotein family.

Its subcellular location is the cell membrane. The protein is Putative lipoprotein LprA (lprA) of Mycobacterium tuberculosis (strain CDC 1551 / Oshkosh).